The primary structure comprises 215 residues: 16S rRNA (adenine(1408)-N(1))-methyltransferase (215 aa).

S-adenosyl-L-methionine is bound by residues Gly32, Asp55, 87-88 (AE), 102-107 (LMPWGS), and 191-193 (TSW).

Belongs to the methyltransferase superfamily. Kanamycin-apramycin resistance family.

The enzyme catalyses adenosine(1408) in 16S rRNA + S-adenosyl-L-methionine = N(1)-methyladenosine(1408) in 16S rRNA + S-adenosyl-L-homocysteine + H(+). Specifically methylates the N(1) position of adenine 1408 in 16S rRNA. Confers resistance to various aminoglycosides, including kanamycin, neomycin and apramycin. In Streptoalloteichus tenebrarius (strain ATCC 17920 / DSM 40477 / JCM 4838 / CBS 697.72 / NBRC 16177 / NCIMB 11028 / NRRL B-12390 / A12253. 1 / ISP 5477) (Streptomyces tenebrarius), this protein is 16S rRNA (adenine(1408)-N(1))-methyltransferase (kamB).